Consider the following 152-residue polypeptide: Catabolic 3-dehydroquinase (152 aa).

Tyr-24 acts as the Proton acceptor in catalysis. Substrate is bound by residues Asn-75, His-81, and Asp-88. His-101 (proton donor) is an active-site residue. Residues Ile-102 to Ser-103 and Arg-112 each bind substrate.

This sequence belongs to the type-II 3-dehydroquinase family. As to quaternary structure, homododecamer. Adopts a ring-like structure, composed of an arrangement of two hexameric rings stacked on top of one another.

The enzyme catalyses 3-dehydroquinate = 3-dehydroshikimate + H2O. It functions in the pathway aromatic compound metabolism; 3,4-dihydroxybenzoate biosynthesis; 3,4-dihydroxybenzoate from 3-dehydroquinate: step 1/2. Its function is as follows. Is involved in the catabolism of quinate. Allows the utilization of quinate as carbon source via the beta-ketoadipate pathway. This is Catabolic 3-dehydroquinase from Phaeosphaeria nodorum (strain SN15 / ATCC MYA-4574 / FGSC 10173) (Glume blotch fungus).